Here is a 322-residue protein sequence, read N- to C-terminus: N-acetyl-gamma-glutamyl-phosphate reductase (322 aa).

C132 is a catalytic residue.

The protein belongs to the NAGSA dehydrogenase family. Type 1 subfamily.

Its subcellular location is the cytoplasm. The enzyme catalyses N-acetyl-L-glutamate 5-semialdehyde + phosphate + NADP(+) = N-acetyl-L-glutamyl 5-phosphate + NADPH + H(+). It functions in the pathway amino-acid biosynthesis; L-arginine biosynthesis; N(2)-acetyl-L-ornithine from L-glutamate: step 3/4. In terms of biological role, catalyzes the NADPH-dependent reduction of N-acetyl-5-glutamyl phosphate to yield N-acetyl-L-glutamate 5-semialdehyde. The sequence is that of N-acetyl-gamma-glutamyl-phosphate reductase from Phocaeicola vulgatus (strain ATCC 8482 / DSM 1447 / JCM 5826 / CCUG 4940 / NBRC 14291 / NCTC 11154) (Bacteroides vulgatus).